Reading from the N-terminus, the 978-residue chain is MFSTTVAEFANELKKSTATLLEQLKSAGVAKTAASDKLNDADKQRLLSYLQSTHGAAGAERKKITLVKKSTTEIKQADASGKARTIQVEVRKKRTFIRRDDGVEVSAEAPALETEQEVEAAPQVDNLELARREEEARRQAELIRRQEEELSERRRQREEQEARSREASEKAAAVAAEAAEAAAAQALKKKSKPVAPEQPAPNPTEIETAKVLAAAEKEQHLAKEKGLAREKELAESKARAAEDVVRAADLGDRRRKAESEAAAIRLMMSSPAKKAPPPPKKPEEVKPAMKGTLHKPAAGAVPAKPAKPGAPGAPGAPAAGAAAGAGKEVKSAKLSSSWAGDPAKKKGIPTRGATAAPGAGRSTNWRAPARGGRRGSSDRDRDDHRVQAAPVEQRVIEVHVPETITVAELAHKMAVKASEVIKHLMKLGQMVTINQPLDQDTAMILVEEMGHKAIVAALDDPEAFTVDEVSQQQSESLPRAPVVTVMGHVDHGKTSLLDYIRRAKVATGEAGGITQHIGAYHVETDRGMISFLDTPGHEAFTAMRARGAKATDIVILVVAADDGVMPQTKEAIKHARAAGVPIVVAINKIDKPDANPERVKNELVVEEVVPEEFGGDSPFVPVSAKTGQGIDALLEQVLLQAEVLELKAPVDAMAKGLVIEAQLDKGRGPVATVLVQSGTLKTGDIVLAGSTYGRVRAMLDENGRTIKTAGPSIPVEIQGLTEVPQAGDEFMVMADERRAREIATYRAGKFRHTKLAKQQAAKLENMFTDMAAGEVKMVPIIIKADVQGSQEALAQSLLKLSTDEVKVQLVYTAVGAISESDVNLAIASKAVIIGFNTRADAGARKLAENNGVDIRYYDIIYDAVDELKLAMSGMLTPDKKEEVIGTAEIRQIFKVSKIGSIAGCMVTAGVVRRTARLRLLRDNMVIFTGELDSLKRFKDDVREVREGFDCGLNIKNYNDIQEGDVLEFFEIREVARTL.

Disordered regions lie at residues alanine 107–leucine 129 and glutamine 146–glutamine 387. The span at glutamine 146–glutamate 169 shows a compositional bias: basic and acidic residues. Residues lysine 170 to alanine 186 are compositionally biased toward low complexity. A compositionally biased stretch (basic and acidic residues) spans alanine 215–serine 259. Low complexity-rich tracts occupy residues lysine 295–glycine 326 and proline 349–arginine 361. Residues glycine 375 to valine 386 are compositionally biased toward basic and acidic residues. Positions proline 478–lysine 647 constitute a tr-type G domain. Residues glycine 487 to threonine 494 are G1. Glycine 487–threonine 494 contacts GTP. A G2 region spans residues glycine 512–histidine 516. Residues aspartate 533 to glycine 536 are G3. Residues aspartate 533–histidine 537 and asparagine 587–aspartate 590 each bind GTP. Residues asparagine 587 to aspartate 590 form a G4 region. The interval serine 623 to lysine 625 is G5.

It belongs to the TRAFAC class translation factor GTPase superfamily. Classic translation factor GTPase family. IF-2 subfamily.

The protein localises to the cytoplasm. In terms of biological role, one of the essential components for the initiation of protein synthesis. Protects formylmethionyl-tRNA from spontaneous hydrolysis and promotes its binding to the 30S ribosomal subunits. Also involved in the hydrolysis of GTP during the formation of the 70S ribosomal complex. The polypeptide is Translation initiation factor IF-2 (Albidiferax ferrireducens (strain ATCC BAA-621 / DSM 15236 / T118) (Rhodoferax ferrireducens)).